The primary structure comprises 378 residues: MTRSGGPRVSTPGRLFIGLMSGTSLDGADGVLVRLAAGQAPQVLATAGLPMPDALRAELLALNRSGADELHRAALAAQALARVYADAVQALLQQARQPATAVTAIGVHGQTVRHRPELGYTLQLNAPALLAELTGIDVVADFRSRDVAAGGQGAPLVPPFHAAMFAAPHERAVLNLGGIANLTLLVPGQPPRGFDTGPANVLLDTWCRRHTGQPYDDNGRWAATGQVQAALLEHLLADEPWLALPPPKSTGRDLFDAAWLDQRLQSYDGPAPAPQDVQATLQRFTARTVADALEAAAPATRDVLVCGGGARNQGLKAELAMCLQRPVQATDAAGVPAQWVEAMAFAWLAQAFLDRTPAGVPQVTGARGPRVLGALYPA.

22 to 29 is a binding site for ATP; the sequence is GTSLDGAD.

This sequence belongs to the anhydro-N-acetylmuramic acid kinase family.

It carries out the reaction 1,6-anhydro-N-acetyl-beta-muramate + ATP + H2O = N-acetyl-D-muramate 6-phosphate + ADP + H(+). The protein operates within amino-sugar metabolism; 1,6-anhydro-N-acetylmuramate degradation. Its pathway is cell wall biogenesis; peptidoglycan recycling. Its function is as follows. Catalyzes the specific phosphorylation of 1,6-anhydro-N-acetylmuramic acid (anhMurNAc) with the simultaneous cleavage of the 1,6-anhydro ring, generating MurNAc-6-P. Is required for the utilization of anhMurNAc either imported from the medium or derived from its own cell wall murein, and thus plays a role in cell wall recycling. This is Anhydro-N-acetylmuramic acid kinase from Bordetella petrii (strain ATCC BAA-461 / DSM 12804 / CCUG 43448).